Here is a 1130-residue protein sequence, read N- to C-terminus: MAAAGQLCLLYLSAGLLSRLGAAFNLDTREDNVIRKYGDPGSLFGFSLAMHWQLQPEDKRLLLVGAPRAEALPLQRANRTGGLYSCDITARGPCTRIEFDNDADPTSESKEDQWMGVTVQSQGPGGKVVTCAHRYEKRQHVNTKQESRDIFGRCYVLSQNLRIEDDMDGGDWSFCDGRLRGHEKFGSCQQGVAATFTKDFHYIVFGAPGTYNWKGIVRVEQKNNTFFDMNIFEDGPYEVGGETEHDESLVPVPANSYLGLLFLTSVSYTDPDQFVYKTRPPREQPDTFPDVMMNSYLGFSLDSGKGIVSKDEITFVSGAPRANHSGAVVLLKRDMKSAHLLPEHIFDGEGLASSFGYDVAVVDLNKDGWQDIVIGAPQYFDRDGEVGGAVYVYMNQQGRWNNVKPIRLNGTKDSMFGIAVKNIGDINQDGYPDIAVGAPYDDLGKVFIYHGSANGINTKPTQVLKGISPYFGYSIAGNMDLDRNSYPDVAVGSLSDSVTIFRSRPVINIQKTITVTPNRIDLRQKTACGAPSGICLQVKSCFEYTANPAGYNPSISIVGTLEAEKERRKSGLSSRVQFRNQGSEPKYTQELTLKRQKQKVCMEETLWLQDNIRDKLRPIPITASVEIQEPSSRRRVNSLPEVLPILNSDEPKTAHIDVHFLKEGCGDDNVCNSNLKLEYKFCTREGNQDKFSYLPIQKGVPELVLKDQKDIALEITVTNSPSNPRNPTKDGDDAHEAKLIATFPDTLTYSAYRELRAFPEKQLSCVANQNGSQADCELGNPFKRNSNVTFYLVLSTTEVTFDTPDLDINLKLETTSNQDNLAPITAKAKVVIELLLSVSGVAKPSQVYFGGTVVGEQAMKSEDEVGSLIEYEFRVINLGKPLTNLGTATLNIQWPKEISNGKWLLYLVKVESKGLEKVTCEPQKEINSLNLTESHNSRKKREITEKQIDDNRKFSLFAERKYQTLNCSVNVNCVNIRCPLRGLDSKASLILRSRLWNSTFLEEYSKLNYLDILMRAFIDVTAAAENIRLPNAGTQVRVTVFPSKTVAQYSGVPWWIILVAILAGILMLALLVFILWKCGFFKRSRYDDSVPRYHAVRIRKEEREIKDEKYIDNLEKKQWITKWNENESYS.

A signal peptide spans 1-23; it reads MAAAGQLCLLYLSAGLLSRLGAA. Over 24–1050 the chain is Extracellular; that stretch reads FNLDTREDNV…FPSKTVAQYS (1027 aa). FG-GAP repeat units lie at residues 30–95, 101–166, 176–229, 283–339, 340–402, 403–458, and 459–518; these read EDNV…GPCT, NDAD…IEDD, DGRL…FFDM, EQPD…KSAH, LLPE…RWNN, VKPI…GINT, and KPTQ…VTPN. Residue N78 is glycosylated (N-linked (GlcNAc...) asparagine). Intrachain disulfides connect C86–C94, C131–C154, and C175–C188. 2 N-linked (GlcNAc...) asparagine glycosylation sites follow: N223 and N323. Positions 363, 365, 367, and 371 each coordinate Ca(2+). N-linked (GlcNAc...) asparagine glycosylation is present at N409. Ca(2+)-binding residues include D425, N427, D429, Y431, D433, D480, D482, N484, Y486, and D488. 4 disulfides stabilise this stretch: C528-C535, C541-C601, C665-C671, and C765-C776. Residues N770, N787, N930, and N966 are each glycosylated (N-linked (GlcNAc...) asparagine). Cystine bridges form between C920-C967 and C973-C978. N997 is a glycosylation site (N-linked (GlcNAc...) asparagine). Residues 1051 to 1076 form a helical membrane-spanning segment; it reads GVPWWIILVAILAGILMLALLVFILW. Residues V1059 and G1064 each carry the phosphoserine modification. Positions 1077–1083 are interaction with HPS5; that stretch reads KCGFFKR. Residues 1077–1130 lie on the Cytoplasmic side of the membrane; sequence KCGFFKRSRYDDSVPRYHAVRIRKEEREIKDEKYIDNLEKKQWITKWNENESYS. C1078 is lipidated: S-palmitoyl cysteine; by DHHC3. The short motif at 1079-1083 is the GFFKR motif element; the sequence is GFFKR. Phosphoserine is present on R1103.

It belongs to the integrin alpha chain family. As to quaternary structure, heterodimer of an alpha and a beta subunit. The alpha subunit is composed of a heavy and a light chain linked by a disulfide bond. Alpha-6 associates with either beta-1 (ITGB1) or beta-4 (ITGB4) to form ITGA6:ITGB1 and ITGA6:ITGB4, respectively. ITGA6:ITGB1 is found in a complex with CD9; interaction takes place in oocytes and is involved in sperm-egg fusion. ITGA6:ITGB4 is found in a ternary complex with NRG1 and ERBB3. ITGA6:ITGB4 is found in a ternary complex with IGF1 and IGF1R. ITGA6:ITGB4 interacts with IGF2. Interacts with ADAM9. Interacts with RAB21. Interacts with MDK. ITGA6:ITGB1 interacts with MDK; this interaction mediates MDK-induced neurite outgrowth. Interacts with CD82; this interaction down-regulates ITGA6-mediated cell adhesion. Isoforms containing segment A, but not segment B, are the major targets for PMA-induced phosphorylation. Phosphorylation occurs on 'Ser-1103' of isoform alpha-6X1X2A. Phosphorylation is not required for the induction of integrin alpha-6A/beta-1 high affinity but may reduce the affinity for ligand. Post-translationally, undergoes PLAU-mediated cleavage at residues Arg-634-635-Arg in a time-dependent manner to produce processed integrin alpha-6 (alpha6p). Production of alpha6p enhances prostate cancer cell invasion and migration. In terms of processing, palmitoylation by DHHC3 enhances stability and cell surface expression. In terms of tissue distribution, integrin alpha-6/beta-4 is predominantly expressed by epithelia. Isoforms containing segment X1 are ubiquitously expressed. Isoforms containing segment X1X2 are expressed in heart, kidney, placenta, colon, duodenum, myoblasts and myotubes, and in a limited number of cell lines; they are always coexpressed with the ubiquitous isoform containing segment X1. In some tissues (e.g. Salivary gland), isoforms containing cytoplasmic segment A and isoforms containing segment B are detected while in others, only isoforms containing one cytoplasmic segment are found (segment A in epidermis and segment B in kidney). Processed integrin alpha-6: Expressed at low levels in normal prostate tissue with elevated levels in prostate cancer tissue (at protein level).

The protein localises to the cell membrane. Functionally, integrin alpha-6/beta-1 (ITGA6:ITGB1) is a receptor for laminin on platelets. Integrin alpha-6/beta-1 (ITGA6:ITGB1) is present in oocytes and is involved in sperm-egg fusion. Integrin alpha-6/beta-4 (ITGA6:ITGB4) is a receptor for laminin in epithelial cells and it plays a critical structural role in the hemidesmosome. ITGA6:ITGB4 binds to NRG1 (via EGF domain) and this binding is essential for NRG1-ERBB signaling. ITGA6:ITGB4 binds to IGF1 and this binding is essential for IGF1 signaling. ITGA6:ITGB4 binds to IGF2 and this binding is essential for IGF2 signaling. The sequence is that of Integrin alpha-6 (ITGA6) from Homo sapiens (Human).